The chain runs to 140 residues: Nucleoside diphosphate kinase (140 aa).

ATP-binding residues include Lys11, Phe59, Arg87, Thr93, Arg104, and Asn114. The Pros-phosphohistidine intermediate role is filled by His117.

The protein belongs to the NDK family. As to quaternary structure, homotetramer. It depends on Mg(2+) as a cofactor.

The protein localises to the cytoplasm. It catalyses the reaction a 2'-deoxyribonucleoside 5'-diphosphate + ATP = a 2'-deoxyribonucleoside 5'-triphosphate + ADP. The catalysed reaction is a ribonucleoside 5'-diphosphate + ATP = a ribonucleoside 5'-triphosphate + ADP. Its function is as follows. Major role in the synthesis of nucleoside triphosphates other than ATP. The ATP gamma phosphate is transferred to the NDP beta phosphate via a ping-pong mechanism, using a phosphorylated active-site intermediate. The chain is Nucleoside diphosphate kinase from Hyphomonas neptunium (strain ATCC 15444).